We begin with the raw amino-acid sequence, 196 residues long: Ribosome maturation factor RimP (196 aa).

The segment at 164–196 (LAPQKPNKPGPKKTGHEKKKPSNESAAGKPRAE) is disordered. The segment covering 173–182 (GPKKTGHEKK) has biased composition (basic residues).

This sequence belongs to the RimP family.

It is found in the cytoplasm. In terms of biological role, required for maturation of 30S ribosomal subunits. This Xanthomonas oryzae pv. oryzae (strain MAFF 311018) protein is Ribosome maturation factor RimP.